The sequence spans 358 residues: DNA-directed RNA polymerase subunit alpha (358 aa).

Positions 1–244 are alpha N-terminal domain (alpha-NTD); that stretch reads MENKLFSCIE…NLFLSIYDTS (244 aa). An alpha C-terminal domain (alpha-CTD) region spans residues 287 to 358; the sequence is YKTSFDKNLT…KMVKYGTVNK (72 aa).

Belongs to the RNA polymerase alpha chain family. Homodimer. The RNAP catalytic core consists of 2 alpha, 1 beta, 1 beta' and 1 omega subunit. When a sigma factor is associated with the core the holoenzyme is formed, which can initiate transcription.

The protein resides in the plastid. It is found in the chloroplast. It carries out the reaction RNA(n) + a ribonucleoside 5'-triphosphate = RNA(n+1) + diphosphate. Functionally, DNA-dependent RNA polymerase catalyzes the transcription of DNA into RNA using the four ribonucleoside triphosphates as substrates. This is DNA-directed RNA polymerase subunit alpha (rpoA) from Bigelowiella natans (Pedinomonas minutissima).